We begin with the raw amino-acid sequence, 239 residues long: Fatty acid metabolism regulator protein (239 aa).

The region spanning 6–74 (QSPAGFAEEY…HGKPTKVNNF (69 aa)) is the HTH gntR-type domain. The H-T-H motif DNA-binding region spans 34 to 53 (ERELSELIGVTRTTLREVLQ).

In terms of assembly, homodimer.

It is found in the cytoplasm. In terms of biological role, multifunctional regulator of fatty acid metabolism. This is Fatty acid metabolism regulator protein from Salmonella paratyphi C (strain RKS4594).